The following is a 142-amino-acid chain: D-aminoacyl-tRNA deacylase (142 aa).

The short motif at 133–134 (GP) is the Gly-cisPro motif, important for rejection of L-amino acids element.

It belongs to the DTD family. As to quaternary structure, homodimer.

The protein localises to the cytoplasm. The enzyme catalyses glycyl-tRNA(Ala) + H2O = tRNA(Ala) + glycine + H(+). The catalysed reaction is a D-aminoacyl-tRNA + H2O = a tRNA + a D-alpha-amino acid + H(+). Functionally, an aminoacyl-tRNA editing enzyme that deacylates mischarged D-aminoacyl-tRNAs. Also deacylates mischarged glycyl-tRNA(Ala), protecting cells against glycine mischarging by AlaRS. Acts via tRNA-based rather than protein-based catalysis; rejects L-amino acids rather than detecting D-amino acids in the active site. By recycling D-aminoacyl-tRNA to D-amino acids and free tRNA molecules, this enzyme counteracts the toxicity associated with the formation of D-aminoacyl-tRNA entities in vivo and helps enforce protein L-homochirality. The protein is D-aminoacyl-tRNA deacylase of Acidothermus cellulolyticus (strain ATCC 43068 / DSM 8971 / 11B).